Here is a 220-residue protein sequence, read N- to C-terminus: Endonuclease NucS (220 aa).

This sequence belongs to the NucS endonuclease family.

The protein localises to the cytoplasm. Cleaves both 3' and 5' ssDNA extremities of branched DNA structures. This chain is Endonuclease NucS, found in Frankia alni (strain DSM 45986 / CECT 9034 / ACN14a).